We begin with the raw amino-acid sequence, 76 residues long: Small proline-rich protein 2G (76 aa).

Repeat copies occupy residues 21–29, 30–38, and 39–47. Residues 21–47 are 3 X 9 AA approximate tandem repeats; the sequence is PKCPEPCPLPKCPEPCPPPKCPEPCPE. Residues 55 to 76 form a disordered region; it reads QQKCPPVQTPPPCQQKCPPKSK.

It belongs to the cornifin (SPRR) family. As to expression, expressed in uterus.

Its subcellular location is the cytoplasm. Functionally, cross-linked envelope protein of keratinocytes. It is a keratinocyte protein that first appears in the cell cytosol, but ultimately becomes cross-linked to membrane proteins by transglutaminase. All that results in the formation of an insoluble envelope beneath the plasma membrane. This chain is Small proline-rich protein 2G (Sprr2g), found in Mus musculus (Mouse).